We begin with the raw amino-acid sequence, 554 residues long: Urocanate hydratase (554 aa).

Residues 51-52 (GG), glutamine 129, 175-177 (GMG), glutamate 195, 241-242 (NA), 262-266 (QTSAH), 272-273 (YL), and tyrosine 321 contribute to the NAD(+) site. The active site involves cysteine 409. Residue glycine 491 coordinates NAD(+).

This sequence belongs to the urocanase family. NAD(+) serves as cofactor.

The protein localises to the cytoplasm. The catalysed reaction is 4-imidazolone-5-propanoate = trans-urocanate + H2O. Its pathway is amino-acid degradation; L-histidine degradation into L-glutamate; N-formimidoyl-L-glutamate from L-histidine: step 2/3. Functionally, catalyzes the conversion of urocanate to 4-imidazolone-5-propionate. The chain is Urocanate hydratase from Methylobacterium nodulans (strain LMG 21967 / CNCM I-2342 / ORS 2060).